The following is a 440-amino-acid chain: tRNA modification GTPase MnmE (440 aa).

Residues R22, E79, and K118 each contribute to the (6S)-5-formyl-5,6,7,8-tetrahydrofolate site. The TrmE-type G domain occupies G214–R366. Residues N224–S229, S243–T249, and D268–G271 contribute to the GTP site. The Mg(2+) site is built by S228 and T249. K440 serves as a coordination point for (6S)-5-formyl-5,6,7,8-tetrahydrofolate.

Belongs to the TRAFAC class TrmE-Era-EngA-EngB-Septin-like GTPase superfamily. TrmE GTPase family. As to quaternary structure, homodimer. Heterotetramer of two MnmE and two MnmG subunits. K(+) serves as cofactor.

The protein resides in the cytoplasm. In terms of biological role, exhibits a very high intrinsic GTPase hydrolysis rate. Involved in the addition of a carboxymethylaminomethyl (cmnm) group at the wobble position (U34) of certain tRNAs, forming tRNA-cmnm(5)s(2)U34. In Granulibacter bethesdensis (strain ATCC BAA-1260 / CGDNIH1), this protein is tRNA modification GTPase MnmE.